Reading from the N-terminus, the 210-residue chain is Guanylate kinase (210 aa).

Residues 8–188 (GNLFIIAAPS…SLASLEHIVL (181 aa)) form the Guanylate kinase-like domain. 15 to 22 (APSGAGKS) contacts ATP.

This sequence belongs to the guanylate kinase family.

The protein localises to the cytoplasm. The catalysed reaction is GMP + ATP = GDP + ADP. In terms of biological role, essential for recycling GMP and indirectly, cGMP. This Idiomarina loihiensis (strain ATCC BAA-735 / DSM 15497 / L2-TR) protein is Guanylate kinase.